The chain runs to 36 residues: Photosystem I reaction center subunit VIII (36 aa).

A helical transmembrane segment spans residues 9 to 29; that stretch reads ISVPLVGLVFPAITMVLSFIY.

It belongs to the PsaI family.

It is found in the plastid. The protein resides in the chloroplast thylakoid membrane. May help in the organization of the PsaL subunit. The chain is Photosystem I reaction center subunit VIII from Huperzia lucidula (Shining clubmoss).